Consider the following 327-residue polypeptide: MKAPVRVAVTGAAGQIGYSLLFRIAAGEMLGKDQPVILQLLEIPQAMKALEGVVMELEDCAFPLLAGLEATDDPKVAFKDADYALLVGAAPRKAGMERRDLLQVNGKIFTEQGRALAEVAKKDVKVLVVGNPANTNALIAYKNAPGLNPRNFTAMTRLDHNRAKAQLAKKTGTGVDRIRRMTVWGNHSSTMFPDLFHAEVDGRPALELVDMEWYEKVFIPTVAQRGAAIIQARGASSAASAANAAIEHIRDWALGTPEGDWVSMAVPSQGEYGIPEGIVYSFPVTAKDGAYRVVEGLEINEFARKRMEITAQELLDEMEQVKALGLI.

11 to 17 provides a ligand contact to NAD(+); that stretch reads GAAGQIG. Arg-92 and Arg-98 together coordinate substrate. Residues Asn-105, Gln-112, and 129–131 each bind NAD(+); that span reads VGN. Substrate is bound by residues Asn-131 and Arg-162. The active-site Proton acceptor is the His-187.

Belongs to the LDH/MDH superfamily. MDH type 2 family.

The catalysed reaction is (S)-malate + NAD(+) = oxaloacetate + NADH + H(+). In terms of biological role, catalyzes the reversible oxidation of malate to oxaloacetate. This Thermus thermophilus (strain ATCC BAA-163 / DSM 7039 / HB27) protein is Malate dehydrogenase.